The sequence spans 201 residues: MELIVKDAQSALTVSETTFGRDFNEALVHQVVVAYAAGARQGTRAQKTRAEVTGSGKKPWRQKGTGRARAGSVKSPIWRSGGVTFAAKPQDHSQKVNKKMYRGALKSILSELVRQDRLIIVEKFSVEAPKTKLLAQKLKDMALEDVLIITGELDENLFLAARNLYKVDVRDVAGIDPVSLIAFDKVVMTADAVKQVEEMLA.

The tract at residues 45-67 is disordered; sequence AQKTRAEVTGSGKKPWRQKGTGR.

This sequence belongs to the universal ribosomal protein uL4 family. Part of the 50S ribosomal subunit.

In terms of biological role, one of the primary rRNA binding proteins, this protein initially binds near the 5'-end of the 23S rRNA. It is important during the early stages of 50S assembly. It makes multiple contacts with different domains of the 23S rRNA in the assembled 50S subunit and ribosome. Its function is as follows. Forms part of the polypeptide exit tunnel. The sequence is that of Large ribosomal subunit protein uL4 from Yersinia enterocolitica serotype O:8 / biotype 1B (strain NCTC 13174 / 8081).